Consider the following 262-residue polypeptide: 4-hydroxy-tetrahydrodipicolinate reductase (262 aa).

9–14 serves as a coordination point for NAD(+); sequence GCLGRM. Residue R36 coordinates NADP(+). Residues 100–102 and 121–124 contribute to the NAD(+) site; these read GTT and SANM. H154 serves as the catalytic Proton donor/acceptor. A (S)-2,3,4,5-tetrahydrodipicolinate-binding site is contributed by H155. Catalysis depends on K158, which acts as the Proton donor. 164 to 165 serves as a coordination point for (S)-2,3,4,5-tetrahydrodipicolinate; it reads GT.

This sequence belongs to the DapB family.

Its subcellular location is the cytoplasm. It carries out the reaction (S)-2,3,4,5-tetrahydrodipicolinate + NAD(+) + H2O = (2S,4S)-4-hydroxy-2,3,4,5-tetrahydrodipicolinate + NADH + H(+). It catalyses the reaction (S)-2,3,4,5-tetrahydrodipicolinate + NADP(+) + H2O = (2S,4S)-4-hydroxy-2,3,4,5-tetrahydrodipicolinate + NADPH + H(+). It participates in amino-acid biosynthesis; L-lysine biosynthesis via DAP pathway; (S)-tetrahydrodipicolinate from L-aspartate: step 4/4. Functionally, catalyzes the conversion of 4-hydroxy-tetrahydrodipicolinate (HTPA) to tetrahydrodipicolinate. The chain is 4-hydroxy-tetrahydrodipicolinate reductase from Wolbachia pipientis subsp. Culex pipiens (strain wPip).